Consider the following 330-residue polypeptide: Ketol-acid reductoisomerase (NADP(+)) (330 aa).

Residues 1–181 (MNAYYEQDAD…GGTKAGVIET (181 aa)) form the KARI N-terminal Rossmann domain. NADP(+) is bound by residues 24-27 (FGSQ), arginine 47, serine 50, serine 52, and 82-85 (DQYQ). Residue histidine 107 is part of the active site. Glycine 133 is an NADP(+) binding site. One can recognise a KARI C-terminal knotted domain in the interval 182 to 327 (TFKNETETDL…AKLRDMMSWL (146 aa)). Aspartate 190, glutamate 194, glutamate 226, and glutamate 230 together coordinate Mg(2+). Serine 251 is a binding site for substrate.

The protein belongs to the ketol-acid reductoisomerase family. The cofactor is Mg(2+).

It catalyses the reaction (2R)-2,3-dihydroxy-3-methylbutanoate + NADP(+) = (2S)-2-acetolactate + NADPH + H(+). The enzyme catalyses (2R,3R)-2,3-dihydroxy-3-methylpentanoate + NADP(+) = (S)-2-ethyl-2-hydroxy-3-oxobutanoate + NADPH + H(+). The protein operates within amino-acid biosynthesis; L-isoleucine biosynthesis; L-isoleucine from 2-oxobutanoate: step 2/4. It participates in amino-acid biosynthesis; L-valine biosynthesis; L-valine from pyruvate: step 2/4. Its function is as follows. Involved in the biosynthesis of branched-chain amino acids (BCAA). Catalyzes an alkyl-migration followed by a ketol-acid reduction of (S)-2-acetolactate (S2AL) to yield (R)-2,3-dihydroxy-isovalerate. In the isomerase reaction, S2AL is rearranged via a Mg-dependent methyl migration to produce 3-hydroxy-3-methyl-2-ketobutyrate (HMKB). In the reductase reaction, this 2-ketoacid undergoes a metal-dependent reduction by NADPH to yield (R)-2,3-dihydroxy-isovalerate. In Chlorobium phaeobacteroides (strain BS1), this protein is Ketol-acid reductoisomerase (NADP(+)).